The following is a 350-amino-acid chain: Biotin synthase (350 aa).

Residues 41–268 (NEVQISRLLS…KSRVRLSAGR (228 aa)) form the Radical SAM core domain. Residues Cys-56, Cys-60, and Cys-63 each contribute to the [4Fe-4S] cluster site. Residues Cys-100, Cys-131, Cys-191, and Arg-263 each coordinate [2Fe-2S] cluster.

Belongs to the radical SAM superfamily. Biotin synthase family. As to quaternary structure, homodimer. [4Fe-4S] cluster is required as a cofactor. Requires [2Fe-2S] cluster as cofactor.

The catalysed reaction is (4R,5S)-dethiobiotin + (sulfur carrier)-SH + 2 reduced [2Fe-2S]-[ferredoxin] + 2 S-adenosyl-L-methionine = (sulfur carrier)-H + biotin + 2 5'-deoxyadenosine + 2 L-methionine + 2 oxidized [2Fe-2S]-[ferredoxin]. Its pathway is cofactor biosynthesis; biotin biosynthesis; biotin from 7,8-diaminononanoate: step 2/2. Functionally, catalyzes the conversion of dethiobiotin (DTB) to biotin by the insertion of a sulfur atom into dethiobiotin via a radical-based mechanism. The protein is Biotin synthase of Shewanella frigidimarina (strain NCIMB 400).